The primary structure comprises 29 residues: Cytochrome b6-f complex subunit 8 (29 aa).

The helical transmembrane segment at I3–V23 threads the bilayer.

This sequence belongs to the PetN family. As to quaternary structure, the 4 large subunits of the cytochrome b6-f complex are cytochrome b6, subunit IV (17 kDa polypeptide, PetD), cytochrome f and the Rieske protein, while the 4 small subunits are PetG, PetL, PetM and PetN. The complex functions as a dimer.

The protein localises to the plastid. The protein resides in the chloroplast thylakoid membrane. Its function is as follows. Component of the cytochrome b6-f complex, which mediates electron transfer between photosystem II (PSII) and photosystem I (PSI), cyclic electron flow around PSI, and state transitions. This chain is Cytochrome b6-f complex subunit 8, found in Rhodomonas salina (Cryptomonas salina).